The primary structure comprises 336 residues: MNDRLSLTSLFPRCLTTCLYIWTAYITLTRIHQIPRWFLALTIVPTLAVALYTYYKVIARGPGSPLDFPDLLVHDLKAAENGLELPPEYMSKRCLTLKHDGRFRVCQVCHVWKPDRCHHCSSCDVCILKMDHHCPWFAECTGFRNQKFFIQFLMYTTLYAFLVLIYTCYELGTWFNSGSFNRELIDFHLLGVALLAVAVFISVLAFTCFSIYQVCKNQTTIEVHGMRRYRRDLEILNDSYGTNEHLENIFDLGSSMANWQDIMGTSWLEWILPIETFKYKKSKHTKDEKGLYFNVRPQVQDRLLSSRCLEDQLLRRVTPRPSLEADRASVEIIDAN.

At 1–6 (MNDRLS) the chain is on the cytoplasmic side. The chain crosses the membrane as a helical span at residues 7-29 (LTSLFPRCLTTCLYIWTAYITLT). Residues 30–37 (RIHQIPRW) are Vacuolar-facing. A helical transmembrane segment spans residues 38 to 58 (FLALTIVPTLAVALYTYYKVI). Over 59-147 (ARGPGSPLDF…AECTGFRNQK (89 aa)) the chain is Cytoplasmic. In terms of domain architecture, DHHC spans 104–154 (RVCQVCHVWKPDRCHHCSSCDVCILKMDHHCPWFAECTGFRNQKFFIQFLM). A helical transmembrane segment spans residues 148–168 (FFIQFLMYTTLYAFLVLIYTC). At 169-188 (YELGTWFNSGSFNRELIDFH) the chain is on the vacuolar side. The chain crosses the membrane as a helical span at residues 189 to 209 (LLGVALLAVAVFISVLAFTCF). The Cytoplasmic segment spans residues 210–336 (SIYQVCKNQT…RASVEIIDAN (127 aa)).

Belongs to the DHHC palmitoyltransferase family. PFA3 subfamily. Autopalmitoylated.

It is found in the vacuole membrane. It catalyses the reaction L-cysteinyl-[protein] + hexadecanoyl-CoA = S-hexadecanoyl-L-cysteinyl-[protein] + CoA. Palmitoyltransferase specific for VAC8. Palmitoylates VAC8 at one or more of its N-terminal cysteine residues, which is required for its proper membrane localization. The chain is Palmitoyltransferase PFA3 (PFA3) from Saccharomyces cerevisiae (strain ATCC 204508 / S288c) (Baker's yeast).